The chain runs to 447 residues: Probable asparagine--tRNA ligase, cytoplasmic (447 aa).

It belongs to the class-II aminoacyl-tRNA synthetase family.

It localises to the cytoplasm. The enzyme catalyses tRNA(Asn) + L-asparagine + ATP = L-asparaginyl-tRNA(Asn) + AMP + diphosphate + H(+). The protein is Probable asparagine--tRNA ligase, cytoplasmic of Vairimorpha ceranae (strain BRL01) (Microsporidian parasite).